Consider the following 248-residue polypeptide: 3-deoxy-manno-octulosonate cytidylyltransferase 2 (248 aa).

The protein belongs to the KdsB family.

The protein resides in the cytoplasm. The enzyme catalyses 3-deoxy-alpha-D-manno-oct-2-ulosonate + CTP = CMP-3-deoxy-beta-D-manno-octulosonate + diphosphate. It functions in the pathway nucleotide-sugar biosynthesis; CMP-3-deoxy-D-manno-octulosonate biosynthesis; CMP-3-deoxy-D-manno-octulosonate from 3-deoxy-D-manno-octulosonate and CTP: step 1/1. The protein operates within bacterial outer membrane biogenesis; lipopolysaccharide biosynthesis. In terms of biological role, activates KDO (a required 8-carbon sugar) for incorporation into bacterial lipopolysaccharide in Gram-negative bacteria. The chain is 3-deoxy-manno-octulosonate cytidylyltransferase 2 from Hydrogenovibrio crunogenus (strain DSM 25203 / XCL-2) (Thiomicrospira crunogena).